Here is a 108-residue protein sequence, read N- to C-terminus: uncharacterized protein (108 aa).

This is an uncharacterized protein from Pasteurella multocida (strain Pm70).